Consider the following 203-residue polypeptide: Probable Tat proofreading chaperone DmsD (203 aa).

The protein belongs to the TorD/DmsD family. DmsD subfamily.

Functionally, required for biogenesis/assembly of DMSO reductase, but not for the interaction of the DmsA signal peptide with the Tat system. May be part of a chaperone cascade complex that facilitates a folding-maturation pathway for the substrate protein. This Haemophilus influenzae (strain ATCC 51907 / DSM 11121 / KW20 / Rd) protein is Probable Tat proofreading chaperone DmsD.